The chain runs to 450 residues: Histidinol dehydrogenase (450 aa).

Y135, Q197, and N225 together coordinate NAD(+). Substrate is bound by residues T248, Q270, and H273. Positions 270 and 273 each coordinate Zn(2+). Catalysis depends on proton acceptor residues E339 and H340. The substrate site is built by H340, D373, E427, and H432. D373 serves as a coordination point for Zn(2+). Position 432 (H432) interacts with Zn(2+).

Belongs to the histidinol dehydrogenase family. Requires Zn(2+) as cofactor.

It catalyses the reaction L-histidinol + 2 NAD(+) + H2O = L-histidine + 2 NADH + 3 H(+). It functions in the pathway amino-acid biosynthesis; L-histidine biosynthesis; L-histidine from 5-phospho-alpha-D-ribose 1-diphosphate: step 9/9. Its function is as follows. Catalyzes the sequential NAD-dependent oxidations of L-histidinol to L-histidinaldehyde and then to L-histidine. The protein is Histidinol dehydrogenase of Corynebacterium jeikeium (strain K411).